A 30-amino-acid polypeptide reads, in one-letter code: Phospholemman-like protein (30 aa).

Belongs to the FXYD family. Phosphorylated by protein kinase a (PK-A) and protein kinase C (PK-C). Phosphorylated in response to insulin and adrenergic stimulation.

It localises to the microsome membrane. The protein localises to the endoplasmic reticulum membrane. In terms of biological role, induces a hyperpolarization-activated chloride current when expressed in Xenopus oocytes. May have a functional role in muscle contraction. The sequence is that of Phospholemman-like protein from Squalus acanthias (Spiny dogfish).